A 360-amino-acid chain; its full sequence is G-protein coupled receptor 15 (360 aa).

At Met-1–Ser-33 the chain is on the extracellular side. Residues Val-34 to Leu-54 traverse the membrane as a helical segment. Residues Met-55–Asp-69 lie on the Cytoplasmic side of the membrane. The helical transmembrane segment at Ile-70–Val-90 threads the bilayer. Residues Asp-91–Ser-120 are Extracellular-facing. A helical membrane pass occupies residues Val-121 to Ser-141. Residues Arg-142–Cys-149 are Cytoplasmic-facing. Residues Ala-150–Leu-170 traverse the membrane as a helical segment. Residues Ser-171–Lys-192 lie on the Extracellular side of the membrane. Residues Leu-193 to Thr-213 form a helical membrane-spanning segment. The Cytoplasmic segment spans residues Cys-214 to Ser-239. Residues Ile-240–Ser-260 traverse the membrane as a helical segment. Residues Lys-261–Met-284 are Extracellular-facing. Residues Glu-285–Phe-305 form a helical membrane-spanning segment. The Cytoplasmic portion of the chain corresponds to Asp-306–Leu-360. The residue at position 359 (Ser-359) is a Phosphoserine.

It belongs to the G-protein coupled receptor 1 family. In terms of assembly, interacts with adapter YWHAE; this interaction promotes ER-to-Golgi transport of GPR15. Phosphorylation is necessary for YWHAE binding and efficient surface expression. In terms of processing, O-glycosylated. Sialylated O-glycans in the N-terminal tail inhibits binding of GPR15LG. Post-translationally, sulfation is required for efficient binding of GPR15LG.

It is found in the cell membrane. Functionally, g protein-coupled receptor that plays an important role in immune homeostasis. Acts via its natural ligand GPR15LG, a chemokine-like polypeptide strongly expressed in gastrointestinal tissues. GPR15-GPR15LG signaling axis regulates intestinal homeostasis and inflammation through the migration of immune cells. Controls thereby the specific homing of T-cells, particularly FOXP3+ regulatory T-cells (Tregs), to the large intestine lamina propria. Also required for skin localization of thymus-derived dendritic epidermal T-cells. Plays an important role in mediating cytoprotective function as well as angiogenesis of thrombomodulin. Mechanistically, preferentially signals through the Gi/o pathway to inhibit adenylate cyclase activity and activate a phosphatidylinositol-calcium second messenger system that regulates the release of Ca(2+) ions from intracellular stores. In Macaca nemestrina (Pig-tailed macaque), this protein is G-protein coupled receptor 15 (GPR15).